The sequence spans 380 residues: MTATLTPTLELAFDLIRRPSVTPVDEGCQELMMRRLAACGFEVERMRIEEVENFWAKRGGDGPVLCFAGHTDVVPTGPLDAWQYQPFDVRVDEEGMLCGRGAADMKGSLASMIVAVERFVADYPNHRGAISFLITSDEEGPAQHGTKAVVERLRERSERLDWCIVGEPSSTTLLGDVVKNGRRGSLGCTLTVYGKQGHVAYPHLAKNPIHLAAPALAELAAEHWDHGNDYFPPTSFQVSNLNSGTGATNVIPGELKAVFNFRFSTESTVEGLQQRVTAILDKHGLDYHLEWALSGLPFLTQPGELLDAVAASIKNVTGRDTTPSTSGGTSDGRFIATLGTQVVELGPVNATIHQINERVLASDLDLLTEVYYQTMVKLLA.

His-70 serves as a coordination point for Zn(2+). Asp-72 is a catalytic residue. Asp-104 lines the Zn(2+) pocket. Residue Glu-138 is the Proton acceptor of the active site. Zn(2+) contacts are provided by Glu-139, Glu-167, and His-353.

Belongs to the peptidase M20A family. DapE subfamily. As to quaternary structure, homodimer. Requires Zn(2+) as cofactor. Co(2+) serves as cofactor.

It carries out the reaction N-succinyl-(2S,6S)-2,6-diaminopimelate + H2O = (2S,6S)-2,6-diaminopimelate + succinate. Its pathway is amino-acid biosynthesis; L-lysine biosynthesis via DAP pathway; LL-2,6-diaminopimelate from (S)-tetrahydrodipicolinate (succinylase route): step 3/3. Functionally, catalyzes the hydrolysis of N-succinyl-L,L-diaminopimelic acid (SDAP), forming succinate and LL-2,6-diaminopimelate (DAP), an intermediate involved in the bacterial biosynthesis of lysine and meso-diaminopimelic acid, an essential component of bacterial cell walls. The polypeptide is Succinyl-diaminopimelate desuccinylase (Ectopseudomonas mendocina (strain ymp) (Pseudomonas mendocina)).